Consider the following 454-residue polypeptide: Probable ECA polymerase (454 aa).

Helical transmembrane passes span 3-23, 39-59, 61-81, 119-139, 154-174, 180-200, 201-221, 222-242, 340-360, 377-397, and 409-429; these read LGQF…ILTL, FSML…MLVF, FGVA…ATAF, LALV…FLLF, GVAL…VYFL, AWFF…VIVG, GTRA…IVRG, WITL…MFWL, LVVM…GLII, YKAA…IVLA, and VFFC…YWLF.

This sequence belongs to the WzyE family. In terms of assembly, probably part of a complex composed of WzxE, WzyE and WzzE.

It localises to the cell inner membrane. It participates in bacterial outer membrane biogenesis; enterobacterial common antigen biosynthesis. Functionally, probably involved in the polymerization of enterobacterial common antigen (ECA) trisaccharide repeat units. This Yersinia pestis bv. Antiqua (strain Angola) protein is Probable ECA polymerase.